The sequence spans 694 residues: Proprotein convertase subtilisin/kexin type 9 (694 aa).

An N-terminal signal peptide occupies residues 1–34; sequence MGTHCSAWLRWPLLPLLPPLLLLLLLLCPTGAGA. The propeptide occupies 35-155; that stretch reads QDEDGDYEEL…IEEDSFVFAQ (121 aa). The residue at position 41 (Tyr41) is a Sulfotyrosine. A Phosphoserine modification is found at Ser50. In terms of domain architecture, Peptidase S8 spans 158 to 470; sequence PWNLERIIPA…RTVWSAHSGP (313 aa). Catalysis depends on charge relay system residues Asp189 and His229. 2 disulfide bridges follow: Cys226/Cys258 and Cys326/Cys361. Ser389 functions as the Charge relay system in the catalytic mechanism. Positions 453 to 694 are C-terminal domain; it reads ETGGQLLCRT…RPSAKASWVQ (242 aa). Intrachain disulfides connect Cys460-Cys530, Cys480-Cys529, and Cys489-Cys512. Positions 499–501 match the Cell attachment site motif; it reads RGD. N-linked (GlcNAc...) asparagine glycosylation occurs at Asn536. 6 cysteine pairs are disulfide-bonded: Cys537–Cys604, Cys555–Cys603, Cys565–Cys591, Cys611–Cys682, Cys629–Cys681, and Cys638–Cys657. At Ser691 the chain carries Phosphoserine.

Belongs to the peptidase S8 family. As to quaternary structure, monomer. Can self-associate to form dimers and higher multimers which may have increased LDLR degrading activity. The precursor protein but not the mature protein may form multimers. Interacts with APOB, VLDLR, LRP8/APOER2 and BACE1. The full-length immature form (pro-PCSK9) interacts with SCNN1A, SCNN1B and SCNN1G. The pro-PCSK9 form (via C-terminal domain) interacts with LDLR. Interacts (via the C-terminal domain) with ANXA2 (via repeat Annexin 1); the interaction inhibits the degradation of LDLR. It depends on Ca(2+) as a cofactor. In terms of processing, cleavage by furin and PCSK5 generates a truncated inactive protein that is unable to induce LDLR degradation. Post-translationally, undergoes autocatalytic cleavage in the endoplasmic reticulum to release the propeptide from the N-terminus and the cleavage of the propeptide is strictly required for its maturation and activation. The cleaved propeptide however remains associated with the catalytic domain through non-covalent interactions, preventing potential substrates from accessing its active site. As a result, it is secreted from cells as a propeptide-containing, enzymatically inactive protein. Phosphorylation protects the propeptide against proteolysis. In terms of tissue distribution, hepatocytes, kidney mesenchymal cells, intestinal ileum, colon epithelia and embryonic brain telencephalon neurons.

The protein localises to the cytoplasm. Its subcellular location is the secreted. The protein resides in the endosome. It localises to the lysosome. It is found in the cell surface. The protein localises to the endoplasmic reticulum. Its subcellular location is the golgi apparatus. Its proteolytic activity is autoinhibited by the non-covalent binding of the propeptide to the catalytic domain. Inhibited by EGTA. Functionally, crucial player in the regulation of plasma cholesterol homeostasis. Binds to low-density lipid receptor family members: low density lipoprotein receptor (LDLR), very low density lipoprotein receptor (VLDLR), apolipoprotein E receptor (LRP1/APOER) and apolipoprotein receptor 2 (LRP8/APOER2), and promotes their degradation in intracellular acidic compartments. Acts via a non-proteolytic mechanism to enhance the degradation of the hepatic LDLR through a clathrin LDLRAP1/ARH-mediated pathway. May prevent the recycling of LDLR from endosomes to the cell surface or direct it to lysosomes for degradation. Can induce ubiquitination of LDLR leading to its subsequent degradation. Inhibits intracellular degradation of APOB via the autophagosome/lysosome pathway in a LDLR-independent manner. Involved in the disposal of non-acetylated intermediates of BACE1 in the early secretory pathway. Inhibits epithelial Na(+) channel (ENaC)-mediated Na(+) absorption by reducing ENaC surface expression primarily by increasing its proteasomal degradation. Regulates neuronal apoptosis via modulation of LRP8/APOER2 levels and related anti-apoptotic signaling pathways. This Mus musculus (Mouse) protein is Proprotein convertase subtilisin/kexin type 9 (Pcsk9).